The primary structure comprises 306 residues: MRYILNNNVEGTSALLGSTVATAFLQPFDFLKIRLQGSGFASGGDLNKFKRVGVIDTCKNVLKNEGIKQFWRGSSPTIVASGIAWGTYMHFYEAYKNILKSKYNVTQLNTFDHFICAVGASATQVFITNPIFLIKTRMQLQTPGSANYYTGIFDGIKKTVKVEGFKGLYKGVIPSLWLTFHGGIQMSSYEHIKFYFSSNSGKSLDSLNASEIFIASSISKFLASTILYPFQVVKTRLQDERNIPNQNNVRVYNGTKDVIFKILKNEGIIGFYRGLVPNTLKVIPNTSITLLLYEEIKKSFNYIINE.

Over 1–10 (MRYILNNNVE) the chain is Mitochondrial intermembrane. Solcar repeat units follow at residues 5–98 (LNNN…YKNI), 108–195 (LNTF…IKFY), and 207–299 (LNAS…IKKS). A helical membrane pass occupies residues 11–31 (GTSALLGSTVATAFLQPFDFL). The Mitochondrial matrix segment spans residues 32–72 (KIRLQGSGFASGGDLNKFKRVGVIDTCKNVLKNEGIKQFWR). A helical transmembrane segment spans residues 73–89 (GSSPTIVASGIAWGTYM). Residues 90–113 (HFYEAYKNILKSKYNVTQLNTFDH) lie on the Mitochondrial intermembrane side of the membrane. A helical transmembrane segment spans residues 114–134 (FICAVGASATQVFITNPIFLI). Topologically, residues 135-163 (KTRMQLQTPGSANYYTGIFDGIKKTVKVE) are mitochondrial matrix. The chain crosses the membrane as a helical span at residues 164-184 (GFKGLYKGVIPSLWLTFHGGI). Residues 185-211 (QMSSYEHIKFYFSSNSGKSLDSLNASE) lie on the Mitochondrial intermembrane side of the membrane. A helical transmembrane segment spans residues 212–232 (IFIASSISKFLASTILYPFQV). At 233-278 (VKTRLQDERNIPNQNNVRVYNGTKDVIFKILKNEGIIGFYRGLVPN) the chain is on the mitochondrial matrix side. The chain crosses the membrane as a helical span at residues 279–296 (TLKVIPNTSITLLLYEEI). Over 297–306 (KKSFNYIINE) the chain is Mitochondrial intermembrane.

This sequence belongs to the mitochondrial carrier (TC 2.A.29) family.

The protein localises to the mitochondrion inner membrane. Mitochondrial solute carriers shuttle metabolites, nucleotides, and cofactors through the mitochondrial inner membrane. Transports folate across the inner membranes of mitochondria. This is Mitochondrial substrate carrier family protein M (mcfM) from Dictyostelium discoideum (Social amoeba).